The following is an 869-amino-acid chain: Dynamin-3 (869 aa).

Positions leucine 28–proline 294 constitute a Dynamin-type G domain. The tract at residues glycine 38 to serine 45 is G1 motif. A GTP-binding site is contributed by glycine 38 to serine 46. The interval valine 64–arginine 66 is G2 motif. Residues aspartate 136–glycine 139 form a G3 motif region. The tract at residues threonine 205–aspartate 208 is G4 motif. Threonine 205–aspartate 211 contacts GTP. The residue at position 231 (tyrosine 231) is a Phosphotyrosine. A G5 motif region spans residues valine 235 to serine 238. Asparagine 236–glutamine 239 is a GTP binding site. Lysine 299 is modified (N6-acetyllysine). The PH domain occupies glutamine 515 to serine 621. At tyrosine 603 the chain carries Phosphotyrosine. Position 604 is an N6-acetyllysine (lysine 604). The GED domain maps to valine 659–valine 750. The segment at threonine 747–aspartate 869 is disordered. Phosphoserine is present on residues serine 769 and serine 773. Pro residues-rich tracts occupy residues proline 797–proline 822 and proline 832–threonine 855. Serine 853 bears the Phosphoserine mark.

The protein belongs to the TRAFAC class dynamin-like GTPase superfamily. Dynamin/Fzo/YdjA family.

It localises to the cytoplasm. The protein localises to the cytoskeleton. The catalysed reaction is GTP + H2O = GDP + phosphate + H(+). Microtubule-associated force-producing protein involved in producing microtubule bundles and able to bind and hydrolyze GTP. Most probably involved in vesicular trafficking processes, in particular endocytosis. In Homo sapiens (Human), this protein is Dynamin-3 (DNM3).